We begin with the raw amino-acid sequence, 309 residues long: Pantothenate kinase (309 aa).

92-99 (GSVAVGKS) contacts ATP.

This sequence belongs to the prokaryotic pantothenate kinase family.

Its subcellular location is the cytoplasm. It carries out the reaction (R)-pantothenate + ATP = (R)-4'-phosphopantothenate + ADP + H(+). The protein operates within cofactor biosynthesis; coenzyme A biosynthesis; CoA from (R)-pantothenate: step 1/5. This Latilactobacillus sakei subsp. sakei (strain 23K) (Lactobacillus sakei subsp. sakei) protein is Pantothenate kinase.